An 811-amino-acid polypeptide reads, in one-letter code: Myb-like DNA-binding protein BAS1 (811 aa).

The 77-residue stretch at 34-110 (HRKNGRNSWS…DVRKRWTGSL (77 aa)) folds into the Myb-like domain. 2 consecutive HTH myb-type domains span residues 111-165 (DPNL…GPGS) and 166-218 (KGRL…TMVV). DNA-binding regions (H-T-H motif) lie at residues 138–161 (WLSI…IEVL) and 191–214 (WRKI…RKII). Positions 237-264 (DMTDGKLRQHPIADSDIRSDSTPNKEEQ) are enriched in basic and acidic residues. Disordered stretches follow at residues 237 to 320 (DMTD…SAPP), 348 to 379 (SQMN…DEHM), 535 to 713 (ATSH…LRDE), and 782 to 811 (LHNE…LNPS). Residues 265 to 275 (LQLSQQNNPSL) are compositionally biased toward low complexity. Positions 282-298 (NVKENESSKLPRLKDND) are enriched in basic and acidic residues. 3 stretches are compositionally biased toward polar residues: residues 348–366 (SQMN…QTSL), 535–613 (ATSH…TSGS), and 653–664 (LNPSPNSVRSNG). A compositionally biased stretch (basic and acidic residues) spans 782-794 (LHNEAKKTSEHDM).

In terms of assembly, monomer.

It localises to the nucleus. Activates HIS4 transcription only in combination with PHO2/BAS2. BAS1 is also involved in the regulation of the purine biosynthesis pathway. The polypeptide is Myb-like DNA-binding protein BAS1 (BAS1) (Saccharomyces cerevisiae (strain ATCC 204508 / S288c) (Baker's yeast)).